Consider the following 139-residue polypeptide: Nucleoside diphosphate kinase (139 aa).

The ATP site is built by K11, F59, R87, T93, R104, and N114. The active-site Pros-phosphohistidine intermediate is the H117.

Belongs to the NDK family. In terms of assembly, homotetramer. The cofactor is Mg(2+).

It is found in the cytoplasm. It carries out the reaction a 2'-deoxyribonucleoside 5'-diphosphate + ATP = a 2'-deoxyribonucleoside 5'-triphosphate + ADP. It catalyses the reaction a ribonucleoside 5'-diphosphate + ATP = a ribonucleoside 5'-triphosphate + ADP. Major role in the synthesis of nucleoside triphosphates other than ATP. The ATP gamma phosphate is transferred to the NDP beta phosphate via a ping-pong mechanism, using a phosphorylated active-site intermediate. The protein is Nucleoside diphosphate kinase of Flavobacterium johnsoniae (strain ATCC 17061 / DSM 2064 / JCM 8514 / BCRC 14874 / CCUG 350202 / NBRC 14942 / NCIMB 11054 / UW101) (Cytophaga johnsonae).